Consider the following 206-residue polypeptide: Large ribosomal subunit protein uL4 (206 aa).

A disordered region spans residues 45–78; the sequence is QGNRAQKDREQVKHTTKKPWRQKGTGRARAGMSS. Basic residues predominate over residues 58–70; that stretch reads HTTKKPWRQKGTG.

Belongs to the universal ribosomal protein uL4 family. As to quaternary structure, part of the 50S ribosomal subunit.

Functionally, one of the primary rRNA binding proteins, this protein initially binds near the 5'-end of the 23S rRNA. It is important during the early stages of 50S assembly. It makes multiple contacts with different domains of the 23S rRNA in the assembled 50S subunit and ribosome. Its function is as follows. Forms part of the polypeptide exit tunnel. The sequence is that of Large ribosomal subunit protein uL4 from Burkholderia ambifaria (strain MC40-6).